A 397-amino-acid polypeptide reads, in one-letter code: Phosphoglycerate kinase (397 aa).

Residues 25–27 (DLN), Arg41, 64–67 (HLGR), Arg118, and Arg151 each bind substrate. Residues Lys202, Glu324, and 350–353 (GGDT) contribute to the ATP site.

This sequence belongs to the phosphoglycerate kinase family. In terms of assembly, monomer.

It localises to the cytoplasm. It catalyses the reaction (2R)-3-phosphoglycerate + ATP = (2R)-3-phospho-glyceroyl phosphate + ADP. Its pathway is carbohydrate degradation; glycolysis; pyruvate from D-glyceraldehyde 3-phosphate: step 2/5. The sequence is that of Phosphoglycerate kinase from Paracidovorax citrulli (strain AAC00-1) (Acidovorax citrulli).